The sequence spans 377 residues: Bacterial actin-related protein (377 aa).

This sequence belongs to the actin family.

Functionally, may be a dominant-negative inhibitor of eukaryotic actin polymerization. The sequence is that of Bacterial actin-related protein (barP) from Haliangium ochraceum (strain DSM 14365 / JCM 11303 / SMP-2).